Consider the following 793-residue polypeptide: Probable exo-1,4-beta-xylosidase xlnD (793 aa).

The signal sequence occupies residues 1–20 (MPRVASVAAVLAALLPSALG). 3 N-linked (GlcNAc...) asparagine glycosylation sites follow: Asn23, Asn87, and Asn142. The active site involves Asp310. Asn326, Asn385, Asn404, Asn440, Asn477, Asn518, Asn559, Asn614, Asn652, Asn679, and Asn701 each carry an N-linked (GlcNAc...) asparagine glycan.

This sequence belongs to the glycosyl hydrolase 3 family.

Its subcellular location is the secreted. It catalyses the reaction Hydrolysis of (1-&gt;4)-beta-D-xylans, to remove successive D-xylose residues from the non-reducing termini.. It participates in glycan degradation; xylan degradation. Its function is as follows. Xylan 1,4-beta-xylosidase involved in the hydrolysis of xylan, a major structural heterogeneous polysaccharide found in plant biomass representing the second most abundant polysaccharide in the biosphere, after cellulose. The chain is Probable exo-1,4-beta-xylosidase xlnD (xlnD) from Aspergillus terreus (strain NIH 2624 / FGSC A1156).